Here is an 809-residue protein sequence, read N- to C-terminus: Phenylalanine--tRNA ligase beta subunit (809 aa).

Residues 39–153 (APPFSQIVVG…EDTPVGADIR (115 aa)) enclose the tRNA-binding domain. The B5 domain occupies 404 to 479 (PKREPVRMRV…RIYGFEQIPA (76 aa)). Positions 457, 463, 466, and 467 each coordinate Mg(2+). The 103-residue stretch at 706 to 808 (PRVPAVTRDI…AGDAFGARLR (103 aa)) folds into the FDX-ACB domain.

The protein belongs to the phenylalanyl-tRNA synthetase beta subunit family. Type 1 subfamily. As to quaternary structure, tetramer of two alpha and two beta subunits. Mg(2+) serves as cofactor.

It localises to the cytoplasm. The enzyme catalyses tRNA(Phe) + L-phenylalanine + ATP = L-phenylalanyl-tRNA(Phe) + AMP + diphosphate + H(+). The sequence is that of Phenylalanine--tRNA ligase beta subunit from Ralstonia nicotianae (strain ATCC BAA-1114 / GMI1000) (Ralstonia solanacearum).